Consider the following 296-residue polypeptide: SHSP domain-containing protein CPUR_05420 (296 aa).

Residues alanine 50–asparagine 83 form a disordered region. The region spanning glutamate 169–valine 296 is the sHSP domain.

It belongs to the small heat shock protein (HSP20) family.

Monooxygenase; part of the ergochrome gene cluster responsible for the typical purple-black color of the ergot sclerotia. The ergochrome gene cluster produces several ergot pigments including the yellow ergochrome secalonic acid and its derivatives, as well as the red anthraquinones endocrocin and clavorubin. The pathway begins with the synthesis of atrochrysone thioester by the polyketide synthase (PKS) CPUR_05437. The atrochrysone carboxyl ACP thioesterase CPUR_05436 then breaks the thioester bond and releases the atrochrysone carboxylic acid from CPUR_05437. The atrochrysone carboxylic acid is then converted to atrochrysone which is further transformed into emodin anthrone. The next step is performed by the anthrone oxygenase CPUR_05434 that catalyzes the oxidation of emodinanthrone to emodin. Emodin is further modified to yield monodictyphenone via several steps involving CPUR_05427, CPUR_05428, CPUR_05429 and CPUR_05430. The short chain dehydrogenase/reductase CPUR_05418 then catalyzes the C-5 ketoreduction to give the xanthone skeleton of the monomeric units. Ergochromes formation requires further dimerization steps of different xanthone units, probably catalyzed by the cytochrome P450 monooxygenase CPUR_05419. CPUR_05425, CPUR_05426 and CPUR_05431 are unique to Claviceps, thus it is likely that they are involved in further modification of xanthone units or in their dimerization. The yellow ergochromes and the red anthraquinone pigments endocrocin and clavorubin are products from the same PKS derived precursors and the latter are likely shunt products in the pathway of xanthone biosynthesis. It is proposed that atrochrysone carboxylic acid released from the PKS CPUR_05437 can also be converted to endocrocin anthrone which is further oxidized into endocrocin by CPUR_05435. Endocrocin could be then modified to clavorubin, possibly by CPUR_05423 and CPUR_05431. Clavorubin is the principal anthraquinone metabolite produced by the cluster with a much higher yield compared to endocrocin. This Claviceps purpurea (strain 20.1) (Ergot fungus) protein is SHSP domain-containing protein CPUR_05420.